A 422-amino-acid polypeptide reads, in one-letter code: UDP-N-acetyl-D-glucosamine 6-dehydrogenase (422 aa).

NAD(+) is bound by residues valine 14, aspartate 32, arginine 37, threonine 83, and threonine 118. The active-site Nucleophile is the cysteine 258. Arginine 329 contributes to the NAD(+) binding site.

This sequence belongs to the UDP-glucose/GDP-mannose dehydrogenase family.

The catalysed reaction is UDP-N-acetyl-alpha-D-glucosamine + 2 NAD(+) + H2O = UDP-2-acetamido-2-deoxy-alpha-D-glucuronate + 2 NADH + 3 H(+). It participates in bacterial outer membrane biogenesis; LPS O-antigen biosynthesis. Requires either potassium or ammonium-containing salts for activity. In terms of biological role, dehydrogenase required for the biosynthesis of the B-band O antigen of serotype O6 lipopolysaccharide. Is also required for flagellin glycosylation. Catalyzes the conversion of UDP-N-acetylglucosamine (UDP-GlcNAc) to UDP-N-acetylglucosaminuronic acid (UDP-GlcNAcA). Can also catalyze the conversion of UDP-N-acetyl-galactosamine (UDP-GalNAc) to UDP-N-acetylgalactosaminuronic acid (UDP-GalNAcA), with low efficiency. Can use NAD(+) or NADP(+), with a preference for NAD(+). This chain is UDP-N-acetyl-D-glucosamine 6-dehydrogenase, found in Pseudomonas aeruginosa.